Consider the following 99-residue polypeptide: Large ribosomal subunit protein bL27 (99 aa).

Positions 1–9 are excised as a propeptide; the sequence is MLIMNLQLF.

Belongs to the bacterial ribosomal protein bL27 family. Post-translationally, the N-terminus is cleaved by ribosomal processing cysteine protease Prp.

This is Large ribosomal subunit protein bL27 from Clostridium botulinum (strain Eklund 17B / Type B).